An 86-amino-acid chain; its full sequence is Apolipoprotein C-I (86 aa).

A signal peptide spans 1 to 26 (MRLFLSLPVLVVALLTILEGPGPAQG).

It belongs to the apolipoprotein C1 family.

The protein resides in the secreted. In terms of biological role, inhibitor of lipoprotein binding to the low density lipoprotein (LDL) receptor, LDL receptor-related protein, and very low density lipoprotein (VLDL) receptor. Associates with high density lipoproteins (HDL) and the triacylglycerol-rich lipoproteins in the plasma and makes up about 10% of the protein of the VLDL and 2% of that of HDL. Appears to interfere directly with fatty acid uptake and is also the major plasma inhibitor of cholesteryl ester transfer protein (CETP). Binds free fatty acids and reduces their intracellular esterification. Modulates the interaction of APOE with beta-migrating VLDL and inhibits binding of beta-VLDL to the LDL receptor-related protein. This Plecturocebus moloch (Dusky titi monkey) protein is Apolipoprotein C-I (APOC1).